The sequence spans 473 residues: Microtubule-binding protein TANGLED (473 aa).

Residues 1–132 (MVARTPQKQR…VTRDIVDAIA (132 aa)) form a required for binding to TAN and location to the cortical division sites (CDS) during cytokinesis region. Disordered stretches follow at residues 131–218 (IAPK…ENSF) and 290–354 (ASKF…LSTA). 2 stretches are compositionally biased toward polar residues: residues 205–216 (ISPQVKGNNGEN) and 307–329 (PTRN…TRTV).

Interacts with POK1. As to expression, strongly expressed in flower buds and root tips.

It localises to the nucleus. Its subcellular location is the nucleolus. The protein resides in the cytoplasm. The protein localises to the cytoskeleton. It is found in the phragmoplast. Its function is as follows. Is required for spatial control cell division during plant development. Through an association with microtubules, acts both for the positioning of cytoskeletal arrays that establish planes of cell division during prophase and for spatial guidance of expanding phragmoplasts toward preestablished cortical division sites (CDS) during cytokinesis. In Arabidopsis thaliana (Mouse-ear cress), this protein is Microtubule-binding protein TANGLED (TAN).